Reading from the N-terminus, the 232-residue chain is NKG2-D type II integral membrane protein (232 aa).

The Cytoplasmic segment spans residues 1–66 (MALIRDRKSH…IEKLKISPMF (66 aa)). Residues 67–89 (VVRVLAIALAIRFTLNTLMWLAI) form a helical; Signal-anchor for type II membrane protein membrane-spanning segment. Residues 90–232 (FKETFQPVLC…NTYICMKRAV (143 aa)) are Extracellular-facing. 2 cysteine pairs are disulfide-bonded: cysteine 112-cysteine 121 and cysteine 115-cysteine 126. In terms of domain architecture, C-type lectin spans 122-228 (HRNNCYQFFN…CANLNTYICM (107 aa)). Asparagine 137, asparagine 147, and asparagine 179 each carry an N-linked (GlcNAc...) asparagine glycan. 2 cysteine pairs are disulfide-bonded: cysteine 143-cysteine 227 and cysteine 205-cysteine 219.

Homodimer; disulfide-linked. Heterohexamer composed of two subunits of KLRK1 and four subunits of HCST/DAP10. Isoform 1 (via transmembrane domain) interacts with HCST/DAP10; the interaction is required for KLRK1 cell surface expression on activated CD8(+) T-cells, but is dispensable on activated TYROBP-expressing NK cells. Isoform 2 (via transmembrane domain) interacts with HCST/DAP10 (via transmembrane domain); the interaction is required for KLRK1 NK cell surface expression and induces NK cell-mediated cytotoxicity. Isoform 2 (via transmembrane domain) interacts with TYROBP (via transmembrane domain); the interaction is required for KLRK1 NK cell surface expression and induce NK cell-mediated cytotoxicity and cytokine secretion. Isoform 1 does not interact with TYROBP. Interacts with CEACAM1; recruits PTPN6 that dephosphorylates VAV1. Expressed in natural killer (NK) cells, activated CD8(+) alpha-beta and gamma-delta T-cells and natural killer T (NKT) cells (at protein level). May be expressed on dendritic cell (DC). Isoform 1 is strongly expressed in natural killer (NK) cells. Isoform 2 is weakly expressed in natural killer (NK) cells. Isoform 1 and isoform 2 are expressed in stimulated, but not in unstimulated, CD8(+) T-cells and macrophages.

It is found in the cell membrane. Its function is as follows. Functions as an activating and costimulatory receptor involved in immunosurveillance upon binding to various cellular stress-inducible ligands displayed at the surface of autologous tumor cells and virus-infected cells. Provides both stimulatory and costimulatory innate immune responses on activated killer (NK) cells, leading to cytotoxic activity. Acts as a costimulatory receptor for T-cell receptor (TCR) in CD8(+) T-cell-mediated adaptive immune responses by amplifying T-cell activation. Stimulates perforin-mediated elimination of ligand-expressing tumor cells. Signaling involves calcium influx, culminating in the expression of TNF-alpha. Participates in NK cell-mediated bone marrow graft rejection. May play a regulatory role in differentiation and survival of NK cells. Binds to ligands belonging to various subfamilies of MHC class I-related glycoproteins including RAET1A, RAET1B, RAET1C, RAET1D, RAET1E, H60 and MULT1. This is NKG2-D type II integral membrane protein (Klrk1) from Mus musculus (Mouse).